The following is a 288-amino-acid chain: Rhythmically expressed gene 5 protein (288 aa).

In terms of tissue distribution, expressed in head, but not in the body. Expression levels oscillate with the circadian rhythm.

Involved in the generation of biological rhythms (Potential). In the head, oscillates in abundance with a daily peak during early night, even under constant darkness. Oscillation is dependent on period (per) function. The polypeptide is Rhythmically expressed gene 5 protein (Reg-5) (Drosophila melanogaster (Fruit fly)).